A 364-amino-acid chain; its full sequence is Abhydrolase domain-containing protein C57A10.08c (364 aa).

Over 1–8 (MYFFTISR) the chain is Cytoplasmic. The helical; Signal-anchor for type II membrane protein transmembrane segment at 9–29 (LTSFISYGILGALGILTFLYL) threads the bilayer. Topologically, residues 30–364 (YDAYLAKSFQ…DKFSTTDHNI (335 aa)) are lumenal. Catalysis depends on serine 183, which acts as the Charge relay system. An N-linked (GlcNAc...) asparagine glycan is attached at asparagine 326. Catalysis depends on histidine 336, which acts as the Charge relay system.

This sequence belongs to the AB hydrolase superfamily.

The protein localises to the endoplasmic reticulum membrane. This Schizosaccharomyces pombe (strain 972 / ATCC 24843) (Fission yeast) protein is Abhydrolase domain-containing protein C57A10.08c.